A 610-amino-acid polypeptide reads, in one-letter code: Protein arginine N-methyltransferase 5 (610 aa).

In terms of domain architecture, SAM-dependent MTase PRMT-type spans 284 to 587 (LEIPLQPLCD…VDATKVWYEW (304 aa)). Tyr-300 contacts S-adenosyl-L-methionine. Phe-303 lines the a protein pocket. S-adenosyl-L-methionine contacts are provided by residues 309-310 (KY), Glu-368, and 396-397 (DM). The a protein site is built by Glu-412 and Glu-421. Residues Glu-412 and Glu-421 each act as proton donor/acceptor in the active site. The segment at 470–610 (AFDYGYVSLL…TRGTGYNMRL (141 aa)) is interaction with vls.

The protein belongs to the class I-like SAM-binding methyltransferase superfamily. Protein arginine N-methyltransferase family. As to quaternary structure, interacts with vls. As to expression, expressed only in ovaries.

It is found in the cytoplasm. In terms of biological role, arginine methyltransferase that can both catalyze the formation of omega-N monomethylarginine (MMA) and symmetrical dimethylarginine (sDMA). Specifically mediates the symmetrical dimethylation of arginine residues in the small nuclear ribonucleoproteins SmD1 and SmD3. Required for arginine symmetrical dimethylation of piwi family proteins, piwi, aub and AGO3, during germline development. Required during oogenesis for pole cell formation in the pathway controlled by oskar (osk) and for abdominal segments during early embryogenesis. Involved in nanos (nos) and germ cell mRNAs localization. The chain is Protein arginine N-methyltransferase 5 from Drosophila melanogaster (Fruit fly).